A 407-amino-acid polypeptide reads, in one-letter code: Imidazolonepropionase (407 aa).

Fe(3+) contacts are provided by H72 and H74. H72 and H74 together coordinate Zn(2+). Residues R81, Y144, and H177 each contribute to the 4-imidazolone-5-propanoate site. Residue Y144 participates in N-formimidoyl-L-glutamate binding. H242 lines the Fe(3+) pocket. A Zn(2+)-binding site is contributed by H242. Position 245 (Q245) interacts with 4-imidazolone-5-propanoate. D317 provides a ligand contact to Fe(3+). Position 317 (D317) interacts with Zn(2+). N319 and G321 together coordinate N-formimidoyl-L-glutamate. T322 provides a ligand contact to 4-imidazolone-5-propanoate.

Belongs to the metallo-dependent hydrolases superfamily. HutI family. Zn(2+) is required as a cofactor. Requires Fe(3+) as cofactor.

Its subcellular location is the cytoplasm. It catalyses the reaction 4-imidazolone-5-propanoate + H2O = N-formimidoyl-L-glutamate. It functions in the pathway amino-acid degradation; L-histidine degradation into L-glutamate; N-formimidoyl-L-glutamate from L-histidine: step 3/3. In terms of biological role, catalyzes the hydrolytic cleavage of the carbon-nitrogen bond in imidazolone-5-propanoate to yield N-formimidoyl-L-glutamate. It is the third step in the universal histidine degradation pathway. This Aliivibrio salmonicida (strain LFI1238) (Vibrio salmonicida (strain LFI1238)) protein is Imidazolonepropionase.